A 296-amino-acid chain; its full sequence is Phosphoribosylaminoimidazole-succinocarboxamide synthase (296 aa).

Belongs to the SAICAR synthetase family.

It carries out the reaction 5-amino-1-(5-phospho-D-ribosyl)imidazole-4-carboxylate + L-aspartate + ATP = (2S)-2-[5-amino-1-(5-phospho-beta-D-ribosyl)imidazole-4-carboxamido]succinate + ADP + phosphate + 2 H(+). Its pathway is purine metabolism; IMP biosynthesis via de novo pathway; 5-amino-1-(5-phospho-D-ribosyl)imidazole-4-carboxamide from 5-amino-1-(5-phospho-D-ribosyl)imidazole-4-carboxylate: step 1/2. The polypeptide is Phosphoribosylaminoimidazole-succinocarboxamide synthase (Trichlorobacter lovleyi (strain ATCC BAA-1151 / DSM 17278 / SZ) (Geobacter lovleyi)).